A 264-amino-acid chain; its full sequence is Acid phosphatase (264 aa).

The first 28 residues, Met1–Ala28, serve as a signal peptide directing secretion.

The protein belongs to the class A bacterial acid phosphatase family. Mg(2+) serves as cofactor. Zn(2+) is required as a cofactor.

Its subcellular location is the periplasm. The catalysed reaction is a phosphate monoester + H2O = an alcohol + phosphate. The polypeptide is Acid phosphatase (phoC) (Zymomonas mobilis subsp. mobilis (strain ATCC 31821 / ZM4 / CP4)).